The chain runs to 388 residues: tRNA (guanine(26)-N(2))-dimethyltransferase (388 aa).

One can recognise a Trm1 methyltransferase domain in the interval 4–383 (KTIVEGTTKV…APITEIKEII (380 aa)). The S-adenosyl-L-methionine site is built by Arg41, Arg78, Asp94, and Ala123. Residues Cys251, Cys254, Cys271, and Cys274 each contribute to the Zn(2+) site.

The protein belongs to the class I-like SAM-binding methyltransferase superfamily. Trm1 family.

It carries out the reaction guanosine(26) in tRNA + 2 S-adenosyl-L-methionine = N(2)-dimethylguanosine(26) in tRNA + 2 S-adenosyl-L-homocysteine + 2 H(+). Functionally, dimethylates a single guanine residue at position 26 of a number of tRNAs using S-adenosyl-L-methionine as donor of the methyl groups. This chain is tRNA (guanine(26)-N(2))-dimethyltransferase, found in Methanosarcina barkeri (strain Fusaro / DSM 804).